A 159-amino-acid polypeptide reads, in one-letter code: SsrA-binding protein (159 aa).

The protein belongs to the SmpB family.

It localises to the cytoplasm. Its function is as follows. Required for rescue of stalled ribosomes mediated by trans-translation. Binds to transfer-messenger RNA (tmRNA), required for stable association of tmRNA with ribosomes. tmRNA and SmpB together mimic tRNA shape, replacing the anticodon stem-loop with SmpB. tmRNA is encoded by the ssrA gene; the 2 termini fold to resemble tRNA(Ala) and it encodes a 'tag peptide', a short internal open reading frame. During trans-translation Ala-aminoacylated tmRNA acts like a tRNA, entering the A-site of stalled ribosomes, displacing the stalled mRNA. The ribosome then switches to translate the ORF on the tmRNA; the nascent peptide is terminated with the 'tag peptide' encoded by the tmRNA and targeted for degradation. The ribosome is freed to recommence translation, which seems to be the essential function of trans-translation. The sequence is that of SsrA-binding protein from Bifidobacterium adolescentis (strain ATCC 15703 / DSM 20083 / NCTC 11814 / E194a).